The sequence spans 426 residues: Gamma-glutamylputrescine oxidoreductase (426 aa).

It belongs to the gamma-glutamylputrescine oxidoreductase family.

The enzyme catalyses gamma-L-glutamylputrescine + O2 + H2O = 4-(gamma-L-glutamylamino)butanal + H2O2 + NH4(+). It participates in amine and polyamine degradation; putrescine degradation; 4-aminobutanoate from putrescine: step 2/4. Functionally, involved in the breakdown of putrescine via the oxidation of L-glutamylputrescine. This chain is Gamma-glutamylputrescine oxidoreductase (puuB), found in Escherichia coli (strain K12).